The following is a 392-amino-acid chain: S-adenosylmethionine synthase (392 aa).

His15 is a binding site for ATP. A Mg(2+)-binding site is contributed by Asp17. Glu43 is a K(+) binding site. L-methionine contacts are provided by Glu56 and Gln99. Positions 99–109 (QSKDIAQGVDE) are flexible loop. ATP is bound by residues 173–175 (DGK), 239–240 (KF), Asp248, 254–255 (RK), Ala271, and Lys275. Asp248 contributes to the L-methionine binding site. Lys279 contributes to the L-methionine binding site.

The protein belongs to the AdoMet synthase family. Homotetramer; dimer of dimers. Requires Mg(2+) as cofactor. The cofactor is K(+).

It is found in the cytoplasm. It carries out the reaction L-methionine + ATP + H2O = S-adenosyl-L-methionine + phosphate + diphosphate. It functions in the pathway amino-acid biosynthesis; S-adenosyl-L-methionine biosynthesis; S-adenosyl-L-methionine from L-methionine: step 1/1. Functionally, catalyzes the formation of S-adenosylmethionine (AdoMet) from methionine and ATP. The overall synthetic reaction is composed of two sequential steps, AdoMet formation and the subsequent tripolyphosphate hydrolysis which occurs prior to release of AdoMet from the enzyme. This chain is S-adenosylmethionine synthase, found in Finegoldia magna (strain ATCC 29328 / DSM 20472 / WAL 2508) (Peptostreptococcus magnus).